We begin with the raw amino-acid sequence, 607 residues long: MNKTYDAIVIGGGHAGIEAAYALAKRAFNVALITLNINRLAMLPCNPSIGGSAKGIITREIDALGGMQGYFADLAMIQIKMLNTSKGPAVWSLRAQIDKEKYCQIILDDIKKQSNITLIEDEVVDLIVNENQCHGVVTKENGNISAKVVVMTTGVYMNSRILRGTDIKYDGPDGEKTSSSLSKNLMKYGFEILRLKTGTPCRIYTDSIDFSKVEKEQLDKNELSFSSHSNVKLDEQTCCFLTHTTAKTKEIILNNLDKSSLYSGIIIGIGPRYCPSVEDKIVRFQEKETHHIFFEPETAKGDIMYINGLSTSMPESVQDQMIASIPGLEKARVQKYGYAIEYDAINPLNLYKSLESKTLSNFFSAGQPNGTSGYEEAAAQGLIAGINAANKLDKMPMMEIKRSSAYIGVLIDDIVTKGTNEPYRMLTSRAEYRLLLRNDNVDERLSQYAFENKMISAQSYNKVLDKYKLINNEIQKLKDEYVSSNSELAKKYNVTSGVSKLKLLANPAVDPKDILGNDFPYLDEITIQVRLFGYLKKQESAAEKMFRLEKLKLPIDLDYNLVENLATEARQKLNQIKPTTIGQASRISGINPADIQMLMYYLNNRKK.

FAD contacts are provided by residues 11–16, valine 123, and serine 178; that span reads GGGHAG. 270 to 284 serves as a coordination point for NAD(+); that stretch reads GPRYCPSVEDKIVRF. Glutamine 367 is a binding site for FAD.

The protein belongs to the MnmG family. Homodimer. Heterotetramer of two MnmE and two MnmG subunits. The cofactor is FAD.

Its subcellular location is the cytoplasm. In terms of biological role, NAD-binding protein involved in the addition of a carboxymethylaminomethyl (cmnm) group at the wobble position (U34) of certain tRNAs, forming tRNA-cmnm(5)s(2)U34. The protein is tRNA uridine 5-carboxymethylaminomethyl modification enzyme MnmG of Metamycoplasma arthritidis (strain 158L3-1) (Mycoplasma arthritidis).